Consider the following 569-residue polypeptide: MDFFSEYGDANRYKIQEVIGKGSYGVVCSAIDQHTGDKVAIKKIHNIFEHLSDAARILREIKLLRLLRHPDIVEIKHIMLPPSRRDFKDIYVVFELMDTDLHQVIKANDDLTKEHHQFFLYQMLRALKYIHTANVYHRDLKPKNILANANCKLKICDFGLARVAFNDTPTTVFWTDYVATRWYRAPELCGSFFTKYSPAIDIWSIGCIFAEILTGKPLFPGKNVVHQLDLMTDLLGTPSMDTVTRIRNEKARRYLSSMRKKQPVPFSERFPKADPAALKLLQRLLAFDPKDRPTAEEALADPYFKGLAKAEREPSCQPITKMEFEFERRKVTKEDVKELIFREILEYHPQLLKDYMNGTEKTNFLYPSALDNFRRQFANLEENGGKNGDAVPSDRKHVSLPRTTTVHSAPIPPKDHQNITSQVPQRIPGRTGRGACPVIPFENLSAMGPYNQRRVVRNPVLPPATTNLSAYAYHRKSDSSERELQQELEKDRMRYQPSEHFMDAKVVSHMSHDLRASSYYVSKAKSDVADRAALQSNMMQGIGPFNGIAAVGGNYNKVSTVQYGVSRMY.

In terms of domain architecture, Protein kinase spans 13–304 (YKIQEVIGKG…AEEALADPYF (292 aa)). Residues 19–27 (IGKGSYGVV) and lysine 42 each bind ATP. Catalysis depends on aspartate 139, which acts as the Proton acceptor. Threonine 175 is subject to Phosphothreonine. The short motif at 175–177 (TDY) is the TXY element. Tyrosine 177 is subject to Phosphotyrosine. The tract at residues 404-432 (TTVHSAPIPPKDHQNITSQVPQRIPGRTG) is disordered.

This sequence belongs to the protein kinase superfamily. CMGC Ser/Thr protein kinase family. MAP kinase subfamily. In terms of processing, dually phosphorylated on Thr-175 and Tyr-177, which activates the enzyme. In terms of tissue distribution, expressed in leaves and panicles.

The enzyme catalyses L-seryl-[protein] + ATP = O-phospho-L-seryl-[protein] + ADP + H(+). It catalyses the reaction L-threonyl-[protein] + ATP = O-phospho-L-threonyl-[protein] + ADP + H(+). With respect to regulation, activated by threonine and tyrosine phosphorylation. This is Mitogen-activated protein kinase 8 (MPK8) from Oryza sativa subsp. japonica (Rice).